Reading from the N-terminus, the 227-residue chain is ATP-dependent Clp protease proteolytic subunit 1 (227 aa).

Ser124 serves as the catalytic Nucleophile. His149 is a catalytic residue.

The protein belongs to the peptidase S14 family. Fourteen ClpP subunits assemble into 2 heptameric rings which stack back to back to give a disk-like structure with a central cavity, resembling the structure of eukaryotic proteasomes.

It localises to the cytoplasm. It catalyses the reaction Hydrolysis of proteins to small peptides in the presence of ATP and magnesium. alpha-casein is the usual test substrate. In the absence of ATP, only oligopeptides shorter than five residues are hydrolyzed (such as succinyl-Leu-Tyr-|-NHMec, and Leu-Tyr-Leu-|-Tyr-Trp, in which cleavage of the -Tyr-|-Leu- and -Tyr-|-Trp bonds also occurs).. Its function is as follows. Cleaves peptides in various proteins in a process that requires ATP hydrolysis. Has a chymotrypsin-like activity. Plays a major role in the degradation of misfolded proteins. This Rhodopirellula baltica (strain DSM 10527 / NCIMB 13988 / SH1) protein is ATP-dependent Clp protease proteolytic subunit 1.